A 440-amino-acid chain; its full sequence is Eukaryotic translation initiation factor 3 subunit E (440 aa).

The PCI domain maps to 219 to 392 (VYFNYPKGRD…GQVVMGAKTT (174 aa)).

The protein belongs to the eIF-3 subunit E family. Component of the eukaryotic translation initiation factor 3 (eIF-3) complex.

The protein localises to the cytoplasm. Its function is as follows. Component of the eukaryotic translation initiation factor 3 (eIF-3) complex, which is involved in protein synthesis of a specialized repertoire of mRNAs and, together with other initiation factors, stimulates binding of mRNA and methionyl-tRNAi to the 40S ribosome. The eIF-3 complex specifically targets and initiates translation of a subset of mRNAs involved in cell proliferation. The polypeptide is Eukaryotic translation initiation factor 3 subunit E (Brugia malayi (Filarial nematode worm)).